The primary structure comprises 188 residues: Photosystem I assembly protein Ycf4 (188 aa).

Helical transmembrane passes span 26-46 (YFWAVIVSIGGLGFLLAGLSS) and 70-90 (LLFYGTAGTLLAIYLWLSLLW).

The protein belongs to the Ycf4 family.

The protein resides in the cellular thylakoid membrane. Seems to be required for the assembly of the photosystem I complex. The polypeptide is Photosystem I assembly protein Ycf4 (Microcystis aeruginosa (strain NIES-843 / IAM M-2473)).